A 465-amino-acid polypeptide reads, in one-letter code: ATP synthase subunit beta (465 aa).

148-155 (GGAGVGKT) is a binding site for ATP.

Belongs to the ATPase alpha/beta chains family. As to quaternary structure, F-type ATPases have 2 components, CF(1) - the catalytic core - and CF(0) - the membrane proton channel. CF(1) has five subunits: alpha(3), beta(3), gamma(1), delta(1), epsilon(1). CF(0) has three main subunits: a(1), b(2) and c(9-12). The alpha and beta chains form an alternating ring which encloses part of the gamma chain. CF(1) is attached to CF(0) by a central stalk formed by the gamma and epsilon chains, while a peripheral stalk is formed by the delta and b chains.

It localises to the cell inner membrane. It catalyses the reaction ATP + H2O + 4 H(+)(in) = ADP + phosphate + 5 H(+)(out). Functionally, produces ATP from ADP in the presence of a proton gradient across the membrane. The catalytic sites are hosted primarily by the beta subunits. The polypeptide is ATP synthase subunit beta (Neisseria meningitidis serogroup B (strain ATCC BAA-335 / MC58)).